The primary structure comprises 446 residues: Regulator of drug sensitivity 2 (446 aa).

Positions 15–45 form a DNA-binding region, zn(2)-C6 fungal-type; that stretch reads KTCLFCKRSHVVCDKQRPCSRCVKRDIAHLC. Disordered regions lie at residues 52–106 and 158–218; these read VPNE…PKLD and ASNV…KEES. Polar residues-rich tracts occupy residues 56–70 and 84–96; these read MPSQHESSPNDNNIQ and DYQNEPVNKSGST. Residue S102 is modified to Phosphoserine. The span at 160–177 shows a compositional bias: polar residues; sequence NVHLENGSQTTQSPLEYQ. The span at 178–192 shows a compositional bias: basic and acidic residues; it reads NDNRRDEIGVARQEN. Polar residues predominate over residues 193–206; the sequence is RSPTIMSGSSNSIS. The span at 207 to 218 shows a compositional bias: basic and acidic residues; that stretch reads KGDKQDQEKEES. A Phosphothreonine modification is found at T231.

In terms of processing, phosphorylated by SNF1 in absence of glucose. The phosphorylation is required for induction of transcription of gluconeogenic genes.

The protein localises to the cytoplasm. Its subcellular location is the nucleus. Transcription factor which regulates the expression of genes for gluconeogenesis, the TCA cycle, and glucose metabolism. Involved in the cell wall remodeling process and drug resistance. This Saccharomyces cerevisiae (strain ATCC 204508 / S288c) (Baker's yeast) protein is Regulator of drug sensitivity 2 (RDS2).